Reading from the N-terminus, the 257-residue chain is Imidazole glycerol phosphate synthase subunit HisF (257 aa).

Catalysis depends on residues D11 and D130.

Belongs to the HisA/HisF family. In terms of assembly, heterodimer of HisH and HisF.

The protein localises to the cytoplasm. The catalysed reaction is 5-[(5-phospho-1-deoxy-D-ribulos-1-ylimino)methylamino]-1-(5-phospho-beta-D-ribosyl)imidazole-4-carboxamide + L-glutamine = D-erythro-1-(imidazol-4-yl)glycerol 3-phosphate + 5-amino-1-(5-phospho-beta-D-ribosyl)imidazole-4-carboxamide + L-glutamate + H(+). The protein operates within amino-acid biosynthesis; L-histidine biosynthesis; L-histidine from 5-phospho-alpha-D-ribose 1-diphosphate: step 5/9. IGPS catalyzes the conversion of PRFAR and glutamine to IGP, AICAR and glutamate. The HisF subunit catalyzes the cyclization activity that produces IGP and AICAR from PRFAR using the ammonia provided by the HisH subunit. This chain is Imidazole glycerol phosphate synthase subunit HisF, found in Pseudoalteromonas atlantica (strain T6c / ATCC BAA-1087).